We begin with the raw amino-acid sequence, 130 residues long: MAPKAEKKPASKAPAEKKPAAKKTASTDGAKKRTKARKETYSSYIYKVLKQTHPDTGISQKAMSIMNSFVNDIFERIASEASKLAAYNKKSTISAREIQTAVRLILPGELAKHAVSEGTRAVTKYSSASN.

Positions 1-19 are enriched in basic and acidic residues; sequence MAPKAEKKPASKAPAEKKP. Positions 1–38 are disordered; it reads MAPKAEKKPASKAPAEKKPAAKKTASTDGAKKRTKARK. 2 positions are modified to N6-acetyllysine; alternate: lysine 7 and lysine 8. Glycyl lysine isopeptide (Lys-Gly) (interchain with G-Cter in SUMO); alternate cross-links involve residues lysine 7 and lysine 8. Serine 11 bears the Phosphoserine mark. Residue lysine 12 is modified to N6-acetyllysine. Lysine 17 bears the N6-acetyllysine; alternate mark. Residue lysine 17 forms a Glycyl lysine isopeptide (Lys-Gly) (interchain with G-Cter in SUMO); alternate linkage. Lysine 18 participates in a covalent cross-link: Glycyl lysine isopeptide (Lys-Gly) (interchain with G-Cter in SUMO). A Glycyl lysine isopeptide (Lys-Gly) (interchain with G-Cter in ubiquitin) cross-link involves residue lysine 124.

The protein belongs to the histone H2B family. The nucleosome is a histone octamer containing two molecules each of H2A, H2B, H3 and H4 assembled in one H3-H4 heterotetramer and two H2A-H2B heterodimers. The octamer wraps approximately 147 bp of DNA. Monoubiquitinated by the UBC2-BRE1 complex to form H2BK123ub1. H2BK123ub1 gives a specific tag for epigenetic transcriptional activation and is also prerequisite for H3K4me and H3K79me formation. H2BK123ub1 also modulates the formation of double-strand breaks during meiosis and is a prerequisite for DNA-damage checkpoint activation. Post-translationally, phosphorylated by STE20 to form H2BS10ph during progression through meiotic prophase. May be correlated with chromosome condensation. In terms of processing, acetylated by GCN5 to form H2BK11ac and H2BK16ac. H2BK16ac can also be formed by ESA1. Acetylation of N-terminal lysines and particularly formation of H2BK11acK16ac has a positive effect on transcription. Sumoylation to form H2BK6su or H2BK7su, and probably also H2BK16su or H2BK17su, occurs preferentially near the telomeres and represses gene transcription.

It is found in the nucleus. It localises to the chromosome. Core component of nucleosome. Nucleosomes wrap and compact DNA into chromatin, limiting DNA accessibility to the cellular machineries which require DNA as a template. Histones thereby play a central role in transcription regulation, DNA repair, DNA replication and chromosomal stability. DNA accessibility is regulated via a complex set of post-translational modifications of histones, also called histone code, and nucleosome remodeling. The protein is Histone H2B.2 (HTB2) of Candida albicans (strain SC5314 / ATCC MYA-2876) (Yeast).